The following is a 298-amino-acid chain: uncharacterized protein (298 aa).

The protein belongs to the glycosyltransferase 2 family.

This is an uncharacterized protein from Mycoplasma genitalium (strain ATCC 33530 / DSM 19775 / NCTC 10195 / G37) (Mycoplasmoides genitalium).